The primary structure comprises 194 residues: FMN-dependent NADH:quinone oxidoreductase (194 aa).

FMN is bound by residues Ser-10, Ser-16 to Ser-18, Met-91 to Phe-94, and Thr-135 to Gly-138.

It belongs to the azoreductase type 1 family. Homodimer. The cofactor is FMN.

It catalyses the reaction 2 a quinone + NADH + H(+) = 2 a 1,4-benzosemiquinone + NAD(+). The enzyme catalyses N,N-dimethyl-1,4-phenylenediamine + anthranilate + 2 NAD(+) = 2-(4-dimethylaminophenyl)diazenylbenzoate + 2 NADH + 2 H(+). Its function is as follows. Quinone reductase that provides resistance to thiol-specific stress caused by electrophilic quinones. Also exhibits azoreductase activity. Catalyzes the reductive cleavage of the azo bond in aromatic azo compounds to the corresponding amines. The polypeptide is FMN-dependent NADH:quinone oxidoreductase (Vibrio parahaemolyticus serotype O3:K6 (strain RIMD 2210633)).